Consider the following 195-residue polypeptide: Imidazoleglycerol-phosphate dehydratase (195 aa).

It belongs to the imidazoleglycerol-phosphate dehydratase family.

The protein resides in the cytoplasm. It carries out the reaction D-erythro-1-(imidazol-4-yl)glycerol 3-phosphate = 3-(imidazol-4-yl)-2-oxopropyl phosphate + H2O. It functions in the pathway amino-acid biosynthesis; L-histidine biosynthesis; L-histidine from 5-phospho-alpha-D-ribose 1-diphosphate: step 6/9. The polypeptide is Imidazoleglycerol-phosphate dehydratase (Cupriavidus metallidurans (strain ATCC 43123 / DSM 2839 / NBRC 102507 / CH34) (Ralstonia metallidurans)).